The chain runs to 264 residues: Thymidylate synthase (264 aa).

Arg-21 provides a ligand contact to dUMP. His-51 contacts (6R)-5,10-methylene-5,6,7,8-tetrahydrofolate. Residue 126–127 (RR) coordinates dUMP. Cys-146 acts as the Nucleophile in catalysis. Residues 166–169 (RSCD), Asn-177, and 207–209 (HLY) each bind dUMP. Asp-169 contributes to the (6R)-5,10-methylene-5,6,7,8-tetrahydrofolate binding site. Ala-263 contacts (6R)-5,10-methylene-5,6,7,8-tetrahydrofolate.

This sequence belongs to the thymidylate synthase family. Bacterial-type ThyA subfamily. Homodimer.

Its subcellular location is the cytoplasm. It catalyses the reaction dUMP + (6R)-5,10-methylene-5,6,7,8-tetrahydrofolate = 7,8-dihydrofolate + dTMP. It participates in pyrimidine metabolism; dTTP biosynthesis. In terms of biological role, catalyzes the reductive methylation of 2'-deoxyuridine-5'-monophosphate (dUMP) to 2'-deoxythymidine-5'-monophosphate (dTMP) while utilizing 5,10-methylenetetrahydrofolate (mTHF) as the methyl donor and reductant in the reaction, yielding dihydrofolate (DHF) as a by-product. This enzymatic reaction provides an intracellular de novo source of dTMP, an essential precursor for DNA biosynthesis. The sequence is that of Thymidylate synthase from Shewanella sp. (strain ANA-3).